The following is a 388-amino-acid chain: 1-deoxy-D-xylulose 5-phosphate reductoisomerase (388 aa).

NADPH is bound by residues T15, G16, S17, I18, and N127. K128 is a 1-deoxy-D-xylulose 5-phosphate binding site. E129 provides a ligand contact to NADPH. D153 lines the Mn(2+) pocket. S154, E155, S179, and H202 together coordinate 1-deoxy-D-xylulose 5-phosphate. E155 contributes to the Mn(2+) binding site. G208 contacts NADPH. S215, N220, K221, and E224 together coordinate 1-deoxy-D-xylulose 5-phosphate. Mn(2+) is bound at residue E224.

It belongs to the DXR family. Mg(2+) serves as cofactor. It depends on Mn(2+) as a cofactor.

It carries out the reaction 2-C-methyl-D-erythritol 4-phosphate + NADP(+) = 1-deoxy-D-xylulose 5-phosphate + NADPH + H(+). The protein operates within isoprenoid biosynthesis; isopentenyl diphosphate biosynthesis via DXP pathway; isopentenyl diphosphate from 1-deoxy-D-xylulose 5-phosphate: step 1/6. Its function is as follows. Catalyzes the NADPH-dependent rearrangement and reduction of 1-deoxy-D-xylulose-5-phosphate (DXP) to 2-C-methyl-D-erythritol 4-phosphate (MEP). The protein is 1-deoxy-D-xylulose 5-phosphate reductoisomerase of Bacteroides fragilis (strain YCH46).